An 89-amino-acid chain; its full sequence is Small ribosomal subunit protein uS15 (89 aa).

It belongs to the universal ribosomal protein uS15 family. Part of the 30S ribosomal subunit. Forms a bridge to the 50S subunit in the 70S ribosome, contacting the 23S rRNA.

Functionally, one of the primary rRNA binding proteins, it binds directly to 16S rRNA where it helps nucleate assembly of the platform of the 30S subunit by binding and bridging several RNA helices of the 16S rRNA. In terms of biological role, forms an intersubunit bridge (bridge B4) with the 23S rRNA of the 50S subunit in the ribosome. This is Small ribosomal subunit protein uS15 from Hamiltonella defensa subsp. Acyrthosiphon pisum (strain 5AT).